Here is a 350-residue protein sequence, read N- to C-terminus: Glycogenin-1 (350 aa).

T2 is subject to N-acetylthreonine. UDP-binding residues include L9, T11, N12, and Y15. Residues L9, T11, N12, and Y15 each coordinate UDP-alpha-D-glucose. Position 44 is a phosphoserine (S44). R77 contacts UDP. UDP-alpha-D-glucose is bound by residues R77, K86, D102, A103, D104, N133, S134, D160, D163, and Q164. UDP-binding residues include D102, A103, and D104. D102 lines the Mn(2+) pocket. Mn(2+) is bound at residue D104. O-linked (Glc...) tyrosine glycosylation is present at Y195. Residues H212, G215, and K218 each coordinate UDP. H212 contacts Mn(2+). UDP-alpha-D-glucose contacts are provided by G215 and K218. Residues 301-333 (SHLSLGEIPAMAQPFVSSEERKERWEQGQADYM) are interaction with GYS1.

The protein belongs to the glycosyltransferase 8 family. Glycogenin subfamily. In terms of assembly, part of the GYS1-GYG1 complex, a heterooctamer composed of a tetramer of GYS1 and 2 dimers of GYG1, where each GYS1 protomer binds to one GYG1 subunit (via GYG1 C-terminus); the GYS1 tetramer may dissociate from GYG1 dimers to continue glycogen polymerization on its own. May also form a heterooctamer complex with GYS2 (via GYG1 C-terminus). Requires Mn(2+) as cofactor. Post-translationally, self-glycosylated by the transfer of glucose residues from UDP-glucose to itself, forming an alpha-1,4-glycan of around 10 residues attached to Tyr-195. Phosphorylated. Highly expressed in skeletal muscle and heart, with lower levels in brain, lung, kidney and pancreas.

Its subcellular location is the cytoplasm. The protein resides in the nucleus. The enzyme catalyses L-tyrosyl-[glycogenin] + UDP-alpha-D-glucose = alpha-D-glucosyl-L-tyrosyl-[glycogenin] + UDP + H(+). The catalysed reaction is [1,4-alpha-D-glucosyl](n)-L-tyrosyl-[glycogenin] + UDP-alpha-D-glucose = [1,4-alpha-D-glucosyl](n+1)-L-tyrosyl-[glycogenin] + UDP + H(+). The protein operates within glycan biosynthesis; glycogen biosynthesis. Its activity is regulated as follows. Inhibited by palladium ions. Functionally, glycogenin participates in the glycogen biosynthetic process along with glycogen synthase and glycogen branching enzyme. It catalyzes the formation of a short alpha (1,4)-glucosyl chain covalently attached via a glucose 1-O-tyrosyl linkage to internal tyrosine residues and these chains act as primers for the elongation reaction catalyzed by glycogen synthase. The polypeptide is Glycogenin-1 (Homo sapiens (Human)).